A 361-amino-acid polypeptide reads, in one-letter code: Protein phosphatase 1 regulatory subunit 7 (361 aa).

The disordered stretch occupies residues 1–64 (MAAERGAGQQ…RGAEDPEEEH (64 aa)). Ala-2 carries the N-acetylalanine modification. 5 positions are modified to phosphoserine: Ser-12, Ser-24, Ser-27, Ser-45, and Ser-48. Residues 17-34 (EVDRRVESEESGDEEGKK) are compositionally biased toward basic and acidic residues. A compositionally biased stretch (basic and acidic residues) spans 48 to 58 (SLKDGVDRGAE). LRR repeat units lie at residues 78 to 99 (DAED…EVLK), 100 to 121 (KVKS…EELQ), 122 to 143 (SLRE…EALT), 144 to 165 (ELEV…DKLT), 166 to 187 (QLKK…SNLH), 188 to 209 (QLQM…DTLT), 210 to 231 (NLES…DALT), 232 to 253 (NLTV…QSLV), 254 to 275 (NLRE…ENNN), 276 to 297 (KLTM…SHLT), and 298 to 319 (ELQE…DELK). Ser-323 is subject to Phosphoserine. Residues 332–361 (NPLQKDPQYRRKVMLALPSVRQIDATYVRF) enclose the LRRCT domain.

It belongs to the SDS22 family. In terms of assembly, interacts with PPP1CA, PPP1CB and PPP1CC/PPP1G. Widely expressed with high level in testis. Expression increases during puberty. Expressed in spermatids and probably also in spermatozoa.

It is found in the nucleus. Its function is as follows. Regulatory subunit of protein phosphatase 1. In Mus musculus (Mouse), this protein is Protein phosphatase 1 regulatory subunit 7 (Ppp1r7).